Here is a 437-residue protein sequence, read N- to C-terminus: Elongation factor 1-gamma (437 aa).

An N-acetylalanine modification is found at A2. Positions 2 to 87 (AAGTLYTYPE…YVSNEELRGS (86 aa)) constitute a GST N-terminal domain. Residues 88–216 (TPEAAAQVVQ…VKLCEKMAQF (129 aa)) enclose the GST C-terminal domain. N6-acetyllysine is present on residues K147 and K212. The span at 221–254 (FAESQPKKDTPRKEKGSREEKQKPQAERKEEKKA) shows a compositional bias: basic and acidic residues. Positions 221–268 (FAESQPKKDTPRKEKGSREEKQKPQAERKEEKKAAAPAPEEEMDECEQ) are disordered. K253 is covalently cross-linked (Glycyl lysine isopeptide (Lys-Gly) (interchain with G-Cter in SUMO1)). The region spanning 276-437 (AKDPFAHLPK…KAVNQGKIFK (162 aa)) is the EF-1-gamma C-terminal domain. K285 participates in a covalent cross-link: Glycyl lysine isopeptide (Lys-Gly) (interchain with G-Cter in SUMO2). Position 401 is an N6-acetyllysine (K401). N6-acetyllysine; alternate is present on K434. At K434 the chain carries N6-malonyllysine; alternate.

EF-1 is composed of four subunits: alpha, beta, delta, and gamma.

Functionally, probably plays a role in anchoring the complex to other cellular components. The chain is Elongation factor 1-gamma (Eef1g) from Mus musculus (Mouse).